A 383-amino-acid polypeptide reads, in one-letter code: Protein COS7 (383 aa).

At 1–42 (MKENEVKDEKSVDVLSFKQLESQKIVLPQDLFRSSFTWFCYE) the chain is on the cytoplasmic side. The chain crosses the membrane as a helical span at residues 43-63 (IYKSLAFRIWMLLWLPLSVWW). Over 64–72 (KLSNNCIYP) the chain is Extracellular. Residues 73–93 (LIVSLLVLFLGPIFVLVICGL) traverse the membrane as a helical segment. Topologically, residues 94-232 (SRKRSLSKQL…RSKLTWFLKR (139 aa)) are cytoplasmic. A helical transmembrane segment spans residues 233–253 (IFTIYSLPLWLAFLNCICVSQ). A topological domain (extracellular) is located at residue His254. Residues 255–275 (FCLAFRILCPGLFFLMMVWLF) form a helical membrane-spanning segment. At 276-383 (QNMRTTALLV…SRNEESLMKK (108 aa)) the chain is on the cytoplasmic side.

Belongs to the DUP/COS family.

It is found in the membrane. The sequence is that of Protein COS7 (COS7) from Saccharomyces cerevisiae (strain ATCC 204508 / S288c) (Baker's yeast).